The following is a 444-amino-acid chain: MSNTILQNLPKGQKVGIAFSGGLDTSAALLWMRQKGAVPYAYTANLGQPDEDDYNAIPKKAMAYGAENARLIDCRAQLAHEGIAAIQCGAFHISTGGIPYFNTTPLGRAVTGTMLVAAMKEDDVNIWGDGSTFKGNDIERFYRYGLLTNPNLKIYKPWLDVQFIEELGGRLEMSQFLIENGFDYKMSVEKAYSTDSNMLGATHEAKDLEQLSTGMKIVKPIMGVAFWDEKVEIKPETVTVTFEDGVPVALNGKHFDNAVDLILEANRIGGRHGLGMSDQIENRIIEAKSRGIYEAPGMALLHIAYERLVTGIHNEDTIEQYRINGIRLGRLLYQGRWFDPQALMLRETAQRWVAKAITGTVTLELRRGNDFTILNTESPNLTYEAERLSMEKVEDAPFDPIDRIGQLTMRNLDVSDTRGKLGIYAQTGLLSAIKDSVLPQLGKK.

ATP-binding positions include alanine 18 to serine 26 and alanine 44. Tyrosine 100 contacts L-citrulline. ATP-binding residues include glycine 130 and threonine 132. Threonine 132, asparagine 136, and aspartate 137 together coordinate L-aspartate. An L-citrulline-binding site is contributed by asparagine 136. Residue aspartate 137 coordinates ATP. Positions 140 and 193 each coordinate L-citrulline. Aspartate 195 serves as a coordination point for ATP. L-citrulline is bound by residues threonine 202, glutamate 204, and glutamate 281.

The protein belongs to the argininosuccinate synthase family. Type 2 subfamily. As to quaternary structure, homotetramer.

Its subcellular location is the cytoplasm. It carries out the reaction L-citrulline + L-aspartate + ATP = 2-(N(omega)-L-arginino)succinate + AMP + diphosphate + H(+). The protein operates within amino-acid biosynthesis; L-arginine biosynthesis; L-arginine from L-ornithine and carbamoyl phosphate: step 2/3. This is Argininosuccinate synthase from Haemophilus influenzae (strain PittGG).